Consider the following 134-residue polypeptide: Large ribosomal subunit protein uL16c (134 aa).

This sequence belongs to the universal ribosomal protein uL16 family. Part of the 50S ribosomal subunit.

The protein localises to the plastid. Its subcellular location is the chloroplast. This is Large ribosomal subunit protein uL16c from Nephroselmis olivacea (Green alga).